The sequence spans 458 residues: Ribosomal protein uS12 methylthiotransferase RimO (458 aa).

The MTTase N-terminal domain occupies 8-119 (PTVAFAHLGC…IVDVLQRVEV (112 aa)). Positions 17, 53, 82, 157, 161, and 164 each coordinate [4Fe-4S] cluster. The region spanning 143-372 (TTDQAVAFLK…MALQQPISAE (230 aa)) is the Radical SAM core domain. Residues 375–446 (SRWVGRTVDV…IYDLNGQMVG (72 aa)) enclose the TRAM domain.

It belongs to the methylthiotransferase family. RimO subfamily. [4Fe-4S] cluster serves as cofactor.

It is found in the cytoplasm. The catalysed reaction is L-aspartate(89)-[ribosomal protein uS12]-hydrogen + (sulfur carrier)-SH + AH2 + 2 S-adenosyl-L-methionine = 3-methylsulfanyl-L-aspartate(89)-[ribosomal protein uS12]-hydrogen + (sulfur carrier)-H + 5'-deoxyadenosine + L-methionine + A + S-adenosyl-L-homocysteine + 2 H(+). Catalyzes the methylthiolation of an aspartic acid residue of ribosomal protein uS12. This chain is Ribosomal protein uS12 methylthiotransferase RimO, found in Synechococcus sp. (strain CC9605).